A 325-amino-acid chain; its full sequence is uncharacterized protein (325 aa).

The N-terminal 69 residues, Met1–Ser69, are a transit peptide targeting the chloroplast. Residue Ala70 is modified to N-acetylalanine.

It belongs to the NAD(P)-dependent epimerase/dehydratase family.

Its subcellular location is the plastid. It is found in the chloroplast. This is an uncharacterized protein from Arabidopsis thaliana (Mouse-ear cress).